A 336-amino-acid chain; its full sequence is 3-isopropylmalate dehydrogenase (336 aa).

The substrate site is built by R87, R97, R121, and D211. D211, D235, and D239 together coordinate Mg(2+). 271–283 (GSAPDIAGQGIAD) serves as a coordination point for NAD(+).

The protein belongs to the isocitrate and isopropylmalate dehydrogenases family. LeuB type 2 subfamily. In terms of assembly, homodimer. Requires Mg(2+) as cofactor. Mn(2+) serves as cofactor.

Its subcellular location is the cytoplasm. It catalyses the reaction (2R,3S)-3-isopropylmalate + NAD(+) = 4-methyl-2-oxopentanoate + CO2 + NADH. Its pathway is amino-acid biosynthesis; L-leucine biosynthesis; L-leucine from 3-methyl-2-oxobutanoate: step 3/4. Catalyzes the oxidation of 3-carboxy-2-hydroxy-4-methylpentanoate (3-isopropylmalate) to 3-carboxy-4-methyl-2-oxopentanoate. The product decarboxylates to 4-methyl-2 oxopentanoate. The polypeptide is 3-isopropylmalate dehydrogenase (Mycobacterium sp. (strain JLS)).